A 429-amino-acid chain; its full sequence is Methylenetetrahydrofolate--tRNA-(uracil-5-)-methyltransferase TrmFO (429 aa).

7–12 (GAGLAG) is a binding site for FAD.

The protein belongs to the MnmG family. TrmFO subfamily. FAD is required as a cofactor.

The protein localises to the cytoplasm. It catalyses the reaction uridine(54) in tRNA + (6R)-5,10-methylene-5,6,7,8-tetrahydrofolate + NADH + H(+) = 5-methyluridine(54) in tRNA + (6S)-5,6,7,8-tetrahydrofolate + NAD(+). It carries out the reaction uridine(54) in tRNA + (6R)-5,10-methylene-5,6,7,8-tetrahydrofolate + NADPH + H(+) = 5-methyluridine(54) in tRNA + (6S)-5,6,7,8-tetrahydrofolate + NADP(+). Catalyzes the folate-dependent formation of 5-methyl-uridine at position 54 (M-5-U54) in all tRNAs. The protein is Methylenetetrahydrofolate--tRNA-(uracil-5-)-methyltransferase TrmFO of Thermosipho africanus (strain TCF52B).